Consider the following 601-residue polypeptide: MHPLQCVLQVQRSLGWGPLASVSWLSLRMCRAHSSLSSTMCPSPERQEDGARKDFSSRLAAGPTFQHFLKSASAPQEKLSSEVEDPPPYLMMDELLGRQRKVYLETYGCQMNVNDTEIAWSILQKSGYLRTSNLQEADVILLVTCSIREKAEQTIWNRLHQLKALKTRRPRSRVPLRIGILGCMAERLKEEILNREKMVDILAGPDAYRDLPRLLAVAESGQQAANVLLSLDETYADVMPVQTSASATSAFVSIMRGCDNMCSYCIVPFTRGRERSRPIASILEEVKKLSEQVFLPPRPPKVLGLQGLKEVTLLGQNVNSFRDNSEVQFNSAVPTNLSRGFTTNYKTKQGGLRFAHLLDQVSRVDPEMRIRFTSPHPKDFPDEVLQLIHERDNICKQIHLPAQSGSSRVLEAMRRGYSREAYVELVHHIRESIPGVSLSSDFIAGFCGETEEDHVQTVSLLREVQYNMGFLFAYSMRQKTRAYHRLKDDVPEEVKLRRLEELITIFREEATKANQTSVGCTQLVLVEGLSKRSATDLCGRNDGNLKVIFPDAEMEDVNNPGLRVRAQPGDYVLVKITSASSQTLRGHVLCRTTLRDSSAYC.

A mitochondrion-targeting transit peptide spans Met-1–His-33. One can recognise an MTTase N-terminal domain in the interval Arg-100–Ser-220. Cys-109, Cys-145, Cys-183, Cys-258, Cys-262, and Cys-265 together coordinate [4Fe-4S] cluster. The Radical SAM core domain maps to Ser-244–Lys-512. The 76-residue stretch at Gln-515–Cys-590 folds into the TRAM domain.

It belongs to the methylthiotransferase family. MiaB subfamily. Interacts with CDK5R1 (p35 form). CDK5RAP1, CDK5RAP2 and CDK5RAP3 show competitive binding to CDK5R1. Forms a complex with CDK5R1 and CDK5. [4Fe-4S] cluster is required as a cofactor. In terms of tissue distribution, expressed in heart, brain, placenta, lung, liver, skeletal muscle, kidney and pancreas. Expressed in neurons of central nervous tissue. As to expression, mainly expressed in brain, placenta and testis. High expression in placenta and lung.

Its subcellular location is the mitochondrion. The catalysed reaction is N(6)-dimethylallyladenosine(37) in tRNA + (sulfur carrier)-SH + AH2 + 2 S-adenosyl-L-methionine = 2-methylsulfanyl-N(6)-dimethylallyladenosine(37) in tRNA + (sulfur carrier)-H + 5'-deoxyadenosine + L-methionine + A + S-adenosyl-L-homocysteine + 2 H(+). Methylthiotransferase that catalyzes the conversion of N6-(dimethylallyl)adenosine (i(6)A) to 2-methylthio-N6-(dimethylallyl)adenosine (ms(2)i(6)A) at position 37 (adjacent to the 3'-end of the anticodon) of four mitochondrial DNA-encoded tRNAs (Ser(UCN), Phe, Tyr and Trp). Essential for efficient and highly accurate protein translation by the ribosome. Specifically inhibits CDK5 activation by CDK5R1. Essential for efficient mitochondrial protein synthesis and respiratory chain; shows pathological consequences in mitochondrial disease. The sequence is that of Mitochondrial tRNA methylthiotransferase CDK5RAP1 from Homo sapiens (Human).